The following is a 255-amino-acid chain: uncharacterized protein (255 aa).

Residues 3–58 (PVERRQIILEMVAEKGIVSIAELTDRMNVSHMTIRRDLQKLEQQGAVVLVSGGVQS) enclose the HTH deoR-type domain. The H-T-H motif DNA-binding region spans 20-39 (VSIAELTDRMNVSHMTIRRD).

This is an uncharacterized protein from Escherichia coli (strain K12).